Here is a 167-residue protein sequence, read N- to C-terminus: UPF0114 protein in repA1-repA2 intergenic region (167 aa).

3 consecutive transmembrane segments (helical) span residues 15 to 35 (LMFP…LKFF), 53 to 73 (LVLV…LVMV), and 136 to 156 (IMLC…MAYI).

The protein belongs to the UPF0114 family.

It localises to the cell membrane. The chain is UPF0114 protein in repA1-repA2 intergenic region from Buchnera aphidicola subsp. Diuraphis noxia.